The sequence spans 96 residues: Salivary protein FS50 (96 aa).

Positions 1 to 19 (MKWILVLALVCLAVEYSYS) are cleaved as a signal peptide. 4 disulfides stabilise this stretch: Cys26–Cys71, Cys50–Cys78, Cys63–Cys91, and Cys67–Cys93.

It localises to the secreted. Functionally, salivary protein that inhibits host voltage-gated sodium channel Nav1.5/SCN5A. This is Salivary protein FS50 from Xenopsylla cheopis (Oriental rat flea).